A 361-amino-acid chain; its full sequence is Divinyl chlorophyll a/b light-harvesting protein PcbE (361 aa).

The next 6 membrane-spanning stretches (helical) occupy residues 27 to 47, 88 to 108, 149 to 169, 210 to 230, 250 to 270, and 315 to 335; these read FIGS…ANTL, VAFV…AGLL, FILG…VEWA, VMGG…FHIA, AVLS…AFWC, and LSNV…WHAI.

The protein belongs to the PsbB/PsbC family. IsiA/Pcb subfamily. The antenna complex consists of divinyl chlorophylls (a and b) and divinyl chlorophyll a/b binding proteins and binds more divinyl chlorophyll b than does the antenna complex from high-light-adapted Prochlorococcus. Divinyl chlorophyll a serves as cofactor. Divinyl chlorophyll b is required as a cofactor.

The protein resides in the cellular thylakoid membrane. In terms of biological role, the antenna complex functions as a light receptor, it captures and delivers excitation energy to photosystems II and I. The Prochlorales pcb genes are not related to higher plant LHCs. In Prochlorococcus marinus (strain SARG / CCMP1375 / SS120), this protein is Divinyl chlorophyll a/b light-harvesting protein PcbE (pcbE).